The following is a 931-amino-acid chain: MPPLKSPAAFHEQRRSLERARTEDYLKRKIRSRPERSELVRMHILEETSAEPSLQAKQLKLKRARLADDLNEKIAQRPGPMELVEKNILPVESSLKEAIIVGQVNYPKVADSSSFDEDSSDALSPEQPASHESQGSVPSPLEARVSEPLLSATSASPTQVVSQLPMGRDSREMLFLAEQPPLPPPPLLPPSLTNGTTIPTAKSTPTLIKQSQPKSASEKSQRSKKAKELKPKVKKLKYHQYIPPDQKQDRGAPPMDSSYAKILQQQQLFLQLQILNQQQQQHHNYQAILPAPPKSAGEALGSSGTPPVRSLSTTNSSSSSGAPGPCGLARQNSTSLTGKPGALPANLDDMKVAELKQELKLRSLPVSGTKTELIERLRAYQDQISPVPGAPKAPAATSILHKAGEVVVAFPAARLSTGPALVAAGLAPAEVVVATVASSGVVKFGSTGSTPPVSPTPSERSLLSTGDENSTPGDTFGEMVTSPLTQLTLQASPLQILVKEEGPRAGSCCLSPGGRAELEGRDKDQMLQEKDKQIEALTRMLRQKQQLVERLKLQLEQEKRAQQPAPAPAPLGTPVKQENSFSSCQLSQQPLGPAHPFNPSLAAPATNHIDPCAVAPGPPSVVVKQEALQPEPEPVPAPQLLLGPQGPSLIKGVAPPTLITDSTGTHLVLTVTNKNADSPGLSSGSPQQPSSQPGSPAPAPSAQMDLEHPLQPLFGTPTSLLKKEPPGYEEAMSQQPKQQENGSSSQQMDDLFDILIQSGEISADFKEPPSLPGKEKPSPKTVCGSPLAAQPSPSAELPQAAPPPPGSPSLPGRLEDFLESSTGLPLLTSGHDGPEPLSLIDDLHSQMLSSTAILDHPPSPMDTSELHFVPEPSSTMGLDLADGHLDSMDWLELSSGGPVLSLAPLSTTAPSLFSTDFLDGHDLQLHWDSCL.

Residues 1–256 (MPPLKSPAAF…KQDRGAPPMD (256 aa)) form a mediates interaction with SCAI and ACTB region. At Ser6 the chain carries Phosphoserine. Residues 6–23 (SPAAFHEQRRSLERARTE) form an intervening spacer sequence 1 region. The stretch at 24-49 (DYLKRKIRSRPERSELVRMHILEETS) is one RPEL 1 repeat. The Bipartite Nuclear localization signal signature appears at 27–65 (KRKIRSRPERSELVRMHILEETSAEPSLQAKQLKLKRAR). Residues 50–67 (AEPSLQAKQLKLKRARLA) are intervening spacer sequence 2. The RPEL 2 repeat unit spans residues 68-93 (DDLNEKIAQRPGPMELVEKNILPVES). 2 disordered regions span residues 110 to 256 (ADSS…PPMD) and 290 to 344 (PAPP…GALP). Residues Ser124, Ser139, and Ser156 each carry the phosphoserine modification. The segment covering 151–162 (SATSASPTQVVS) has biased composition (polar residues). Over residues 180–189 (PPLPPPPLLP) the composition is skewed to pro residues. The span at 191–215 (SLTNGTTIPTAKSTPTLIKQSQPKS) shows a compositional bias: polar residues. A compositionally biased stretch (basic and acidic residues) spans 216 to 231 (ASEKSQRSKKAKELKP). Thr305 bears the Phosphothreonine mark. A phosphoserine mark is found at Ser310 and Ser312. The span at 310-320 (SLSTTNSSSSS) shows a compositional bias: low complexity. Residue Thr313 is modified to Phosphothreonine. Ser317, Ser320, and Ser333 each carry phosphoserine. The SAP domain occupies 347–381 (LDDMKVAELKQELKLRSLPVSGTKTELIERLRAYQ). Phosphoserine is present on residues Ser385 and Ser446. The tract at residues 444–476 (FGSTGSTPPVSPTPSERSLLSTGDENSTPGDTF) is disordered. Thr447 is modified (phosphothreonine). The residue at position 449 (Ser449) is a Phosphoserine. Thr450 bears the Phosphothreonine mark. Ser454 bears the Phosphoserine mark. A Phosphothreonine modification is found at Thr456. At Ser458 the chain carries Phosphoserine. A compositionally biased stretch (polar residues) spans 459–473 (ERSLLSTGDENSTPG). 4 positions are modified to phosphoserine: Ser482, Ser492, Ser507, and Ser511. Residues 515-563 (RAELEGRDKDQMLQEKDKQIEALTRMLRQKQQLVERLKLQLEQEKRAQQ) are a coiled coil. Disordered stretches follow at residues 558-577 (EKRA…PVKQ), 674-746 (KNAD…SSSQ), and 763-816 (ADFK…RLED). Residues 678-694 (SPGLSSGSPQQPSSQPG) show a composition bias toward low complexity. Ser685, Ser691, and Ser695 each carry phosphoserine. The span at 732 to 746 (MSQQPKQQENGSSSQ) shows a compositional bias: polar residues. Positions 763–778 (ADFKEPPSLPGKEKPS) are enriched in basic and acidic residues. Positions 784-799 (GSPLAAQPSPSAELPQ) are enriched in low complexity. Phosphoserine occurs at positions 792, 807, and 859.

Interacts with SRF, forming the SRF-MRTFA nuclear complex which binds the 5'-CArG-3' consensus motif (CArG box) on DNA via SRF. Interacts (via RPEL repeats) with globular actin (G-actin), thereby regulating its subcellular location and activity of the complex formed with SRF. Either forms a trivalent (by binding three G-actin monomers) or pentavalent (by binding five G-actin monomers) complex with G-actin. Forms a nuclear ternary complex with SCAI and SRF, leading to suppress MRTFA-induced SRF transcriptional activity. Interacts with beta-actin (ACTB); interaction with ACTB prevents interaction with SCAI. Interacts with MRTFB. Post-translationally, phosphorylation at Ser-6 by Erk inhibits binding of globular actin (G-actin), unmasking the nuclear localization signal (NLS) and promoting nuclear import. As to expression, ubiquitously expressed, has been detected in lung, placenta, small intestine, liver, kidney, spleen, thymus, colon, muscle, heart and brain. Expressed in peripheral blood mononuclear cells (at protein level).

The protein resides in the cytoplasm. It localises to the nucleus. In terms of biological role, transcription coactivator that associates with the serum response factor (SRF) transcription factor to control expression of genes regulating the cytoskeleton during development, morphogenesis and cell migration. The SRF-MRTFA complex activity responds to Rho GTPase-induced changes in cellular globular actin (G-actin) concentration, thereby coupling cytoskeletal gene expression to cytoskeletal dynamics. MRTFA binds G-actin via its RPEL repeats, regulating activity of the MRTFA-SRF complex. Activity is also regulated by filamentous actin (F-actin) in the nucleus. This Homo sapiens (Human) protein is Myocardin-related transcription factor A.